The primary structure comprises 384 residues: Lipid-A-disaccharide synthase (384 aa).

It belongs to the LpxB family.

It carries out the reaction a lipid X + a UDP-2-N,3-O-bis[(3R)-3-hydroxyacyl]-alpha-D-glucosamine = a lipid A disaccharide + UDP + H(+). It functions in the pathway bacterial outer membrane biogenesis; LPS lipid A biosynthesis. Functionally, condensation of UDP-2,3-diacylglucosamine and 2,3-diacylglucosamine-1-phosphate to form lipid A disaccharide, a precursor of lipid A, a phosphorylated glycolipid that anchors the lipopolysaccharide to the outer membrane of the cell. The polypeptide is Lipid-A-disaccharide synthase (Neisseria meningitidis serogroup C / serotype 2a (strain ATCC 700532 / DSM 15464 / FAM18)).